A 96-amino-acid polypeptide reads, in one-letter code: Co-chaperonin GroES 1 (96 aa).

Belongs to the GroES chaperonin family. Heptamer of 7 subunits arranged in a ring. Interacts with the chaperonin GroEL.

It localises to the cytoplasm. Functionally, together with the chaperonin GroEL, plays an essential role in assisting protein folding. The GroEL-GroES system forms a nano-cage that allows encapsulation of the non-native substrate proteins and provides a physical environment optimized to promote and accelerate protein folding. GroES binds to the apical surface of the GroEL ring, thereby capping the opening of the GroEL channel. The sequence is that of Co-chaperonin GroES 1 from Vibrio vulnificus (strain CMCP6).